We begin with the raw amino-acid sequence, 86 residues long: Superoxide dismutase [Cu-Zn] (86 aa).

Residues 1–26 (AKEKGGKLTAGLAAGGHWNPNKAPHH) form a disordered region. Positions 7–16 (KLTAGLAAGG) are enriched in low complexity. Position 17 (H17) interacts with Cu cation. Positions 17, 26, 35, and 38 each coordinate Zn(2+). H73 is a Cu cation binding site.

The protein belongs to the Cu-Zn superoxide dismutase family. Homodimer. Cu cation serves as cofactor. Requires Zn(2+) as cofactor.

It localises to the periplasm. The catalysed reaction is 2 superoxide + 2 H(+) = H2O2 + O2. In terms of biological role, destroys radicals which are normally produced within the cells and which are toxic to biological systems. In Mannheimia haemolytica (Pasteurella haemolytica), this protein is Superoxide dismutase [Cu-Zn] (sodC).